The following is a 1173-amino-acid chain: PR domain zinc finger protein 10 (1173 aa).

The segment at R146–N211 is disordered. Residues D154 to A167 are compositionally biased toward polar residues. Residues K172–A202 are compositionally biased toward acidic residues. In terms of domain architecture, SET spans L248–A366. An N-terminal PR domain; essential for transcriptional activator activity region spans residues I267–E371. The segment at W395–H417 adopts a C2H2-type 1 zinc-finger fold. A compositionally biased stretch (basic residues) spans R430–R447. Residues R430 to F451 are disordered. C2H2-type zinc fingers lie at residues F559–H581, L589–H611, Y617–H639, F645–H668, Y673–H695, F701–H724, F756–H779, Y801–H824, and V863–H886. The interval Q926–Q1153 is C-terminal glutamine-rich region; essential for transcriptional activator activity. 2 disordered regions span residues P1014–A1056 and K1125–P1173. Positions Q1150 to T1160 are enriched in low complexity. Residues N1161–P1173 show a composition bias toward polar residues.

The protein belongs to the class V-like SAM-binding methyltransferase superfamily.

It is found in the nucleus. In terms of biological role, transcriptional activator, essential for early embryonic development and survival of embryonic stem cells (ESCs). Supports cell growth and survival during early development by transcriptionally activating the expression of the translation initiation factor EIF3B, to sustain global translation. Activates the transcription of FLNC. The sequence is that of PR domain zinc finger protein 10 (prdm10) from Xenopus tropicalis (Western clawed frog).